A 168-amino-acid chain; its full sequence is Disulfide bond formation protein B (168 aa).

The Cytoplasmic segment spans residues 1 to 11 (MSNPMRPVRSI). A helical transmembrane segment spans residues 12-28 (LLAIFTGCAGLIGYALY). At 29 to 46 (LQLVENLLPCPLCVVQRM) the chain is on the periplasmic side. An intrachain disulfide couples cysteine 38 to cysteine 41. Residues 47 to 63 (AYWLIGLTALAGFFHTP) form a helical membrane-spanning segment. Topologically, residues 64 to 69 (ETTGRR) are cytoplasmic. A helical membrane pass occupies residues 70–87 (IYAGLMAVFAFTGGLVAL). The Periplasmic segment spans residues 88–143 (RQAWLVRYPEAFECGISPEEAFLNALPLARWWPVMFEANGDCADVTWKFASLTLPD). The cysteines at positions 101 and 129 are disulfide-linked. The helical transmembrane segment at 144 to 162 (WSAIFFMILAALSIYVLLV) threads the bilayer. The Cytoplasmic segment spans residues 163-168 (RENQRE).

This sequence belongs to the DsbB family.

It is found in the cell inner membrane. In terms of biological role, required for disulfide bond formation in some periplasmic proteins. Acts by oxidizing the DsbA protein. This is Disulfide bond formation protein B from Nitrosospira multiformis (strain ATCC 25196 / NCIMB 11849 / C 71).